Reading from the N-terminus, the 441-residue chain is Capsid vertex component 1 (441 aa).

It belongs to the herpesviridae CVC1 protein family. Interacts (via C-terminus) with capsid vertex component 2/CVC2.

The protein localises to the virion. The protein resides in the host nucleus. In terms of biological role, capsid vertex-specific component that plays a role during viral DNA encapsidation, assuring correct genome cleavage and presumably stabilizing capsids that contain full-length viral genomes. The chain is Capsid vertex component 1 from Saimiriine herpesvirus 2 (strain 11) (SaHV-2).